Reading from the N-terminus, the 534-residue chain is Multicopper oxidase LPR1 homolog 3 (534 aa).

The Cu cation site is built by His84 and His86. Residue Asn109 is glycosylated (N-linked (GlcNAc...) asparagine). Cu cation is bound by residues His133 and His135. A Plastocyanin-like domain is found at 219–291 (PFQAVQRRRY…VDFSLVVNPN (73 aa)). Residues Asn234, Asn291, Asn312, Asn323, Asn341, and Asn372 are each glycosylated (N-linked (GlcNAc...) asparagine). His419, His422, and His424 together coordinate Cu cation. A glycan (N-linked (GlcNAc...) asparagine) is linked at Asn450. The Cu cation site is built by His515, Cys516, His517, His521, and Met526.

It belongs to the multicopper oxidase family. It depends on Cu cation as a cofactor. In terms of tissue distribution, expressed in roots and basal stems.

It localises to the endoplasmic reticulum membrane. Multicopper oxidase that may play a role in the maintenance of inorganic phosphate homeostasis. The chain is Multicopper oxidase LPR1 homolog 3 from Oryza sativa subsp. japonica (Rice).